We begin with the raw amino-acid sequence, 345 residues long: NADH-ubiquinone oxidoreductase chain 2 (345 aa).

The next 9 membrane-spanning stretches (helical) occupy residues 25-45 (HWLLAWMGLEINTLAIIPLMT), 60-80 (FLTQAAASALLLFSSLNNAWL), 99-119 (TIAICMKLGLAPFHFWLPEVL), 149-171 (LNTPLLLTLGLTSTLIGGWGGLN), 178-198 (ILAFSSIAHLGWMISILPFSP), 199-219 (QLMILNLTIYLIMTSTMFLVL), 242-262 (ALSLLTLLSLGGLPPLSGFVP), 282-302 (LALSALLSLFFYLRLTYIVTL), and 324-344 (LLLSIALILSSFIIPISPLTL).

This sequence belongs to the complex I subunit 2 family. In terms of assembly, core subunit of respiratory chain NADH dehydrogenase (Complex I) which is composed of 45 different subunits.

It localises to the mitochondrion inner membrane. The catalysed reaction is a ubiquinone + NADH + 5 H(+)(in) = a ubiquinol + NAD(+) + 4 H(+)(out). Core subunit of the mitochondrial membrane respiratory chain NADH dehydrogenase (Complex I) which catalyzes electron transfer from NADH through the respiratory chain, using ubiquinone as an electron acceptor. Essential for the catalytic activity and assembly of complex I. The sequence is that of NADH-ubiquinone oxidoreductase chain 2 (mt-nd2) from Xenopus laevis (African clawed frog).